The chain runs to 255 residues: Glutamate racemase (255 aa).

Substrate-binding positions include 7–8 (DS) and 39–40 (YG). Catalysis depends on C70, which acts as the Proton donor/acceptor. Substrate is bound at residue 71 to 72 (NT). C181 acts as the Proton donor/acceptor in catalysis. Residue 182-183 (TH) coordinates substrate.

It belongs to the aspartate/glutamate racemases family. In terms of assembly, homodimer.

The catalysed reaction is L-glutamate = D-glutamate. The protein operates within cell wall biogenesis; peptidoglycan biosynthesis. Functionally, provides the (R)-glutamate required for cell wall biosynthesis. The chain is Glutamate racemase from Helicobacter pylori (strain J99 / ATCC 700824) (Campylobacter pylori J99).